Here is a 388-residue protein sequence, read N- to C-terminus: Beta-1,4-galactosyltransferase 5 (388 aa).

The Cytoplasmic segment spans residues 1–14; sequence MRARRGLLRLPRRS. Residues 15-35 form a helical; Signal-anchor for type II membrane protein membrane-spanning segment; that stretch reads LLAALFFFSLSSSLLYFVYVA. Over 36–388 the chain is Lumenal; it reads PGIVNTYLFM…TPELAQVNEY (353 aa). N-linked (GlcNAc...) asparagine glycans are attached at residues Asn77, Asn81, Asn90, Asn111, and Asn128. A disulfide bridge connects residues Cys114 and Cys158. Residues 169–173, 208–210, 235–236, Tyr264, and Trp296 each bind UDP-alpha-D-galactose; these read PFRNR, FNR, and VD. A disulfide bridge connects residues Cys229 and Cys248. Asp236 serves as a coordination point for Mn(2+). 298–301 is a binding site for N-acetyl-D-glucosamine; that stretch reads GEDD. Residue His329 coordinates Mn(2+). 329–330 is a UDP-alpha-D-galactose binding site; that stretch reads HH. Residue Arg340 participates in N-acetyl-D-glucosamine binding. N-linked (GlcNAc...) asparagine glycans are attached at residues Asn364 and Asn373.

It belongs to the glycosyltransferase 7 family. The cofactor is Mn(2+). As to expression, ubiquitously expressed.

The protein localises to the golgi apparatus. The protein resides in the golgi stack membrane. The enzyme catalyses a beta-D-glucosyl-(1&lt;-&gt;1')-N-acylsphing-4-enine + UDP-alpha-D-galactose = a beta-D-Gal-(1-&gt;4)-beta-D-Glc-(1&lt;-&gt;1)-Cer(d18:1(4E)) + UDP + H(+). It functions in the pathway protein modification; protein glycosylation. Its pathway is sphingolipid metabolism. In terms of biological role, catalyzes the synthesis of lactosylceramide (LacCer) via the transfer of galactose from UDP-galactose to glucosylceramide (GlcCer). LacCer is the starting point in the biosynthesis of all gangliosides (membrane-bound glycosphingolipids) which play pivotal roles in the CNS including neuronal maturation and axonal and myelin formation. Plays a role in the glycosylation of BMPR1A and regulation of its protein stability. Essential for extraembryonic development during early embryogenesis. The chain is Beta-1,4-galactosyltransferase 5 from Homo sapiens (Human).